A 455-amino-acid polypeptide reads, in one-letter code: Argininosuccinate lyase (455 aa).

This sequence belongs to the lyase 1 family. Argininosuccinate lyase subfamily.

The protein localises to the cytoplasm. The catalysed reaction is 2-(N(omega)-L-arginino)succinate = fumarate + L-arginine. Its pathway is amino-acid biosynthesis; L-arginine biosynthesis; L-arginine from L-ornithine and carbamoyl phosphate: step 3/3. This Shewanella sp. (strain ANA-3) protein is Argininosuccinate lyase.